The sequence spans 312 residues: tRNA dimethylallyltransferase (312 aa).

12–19 contributes to the ATP binding site; the sequence is GPTAIGKS. 14–19 lines the substrate pocket; it reads TAIGKS. Interaction with substrate tRNA stretches follow at residues 38-41 and 162-166; these read DSKL and QRVLR.

The protein belongs to the IPP transferase family. Monomer. It depends on Mg(2+) as a cofactor.

It carries out the reaction adenosine(37) in tRNA + dimethylallyl diphosphate = N(6)-dimethylallyladenosine(37) in tRNA + diphosphate. Its function is as follows. Catalyzes the transfer of a dimethylallyl group onto the adenine at position 37 in tRNAs that read codons beginning with uridine, leading to the formation of N6-(dimethylallyl)adenosine (i(6)A). This chain is tRNA dimethylallyltransferase, found in Buchnera aphidicola subsp. Cinara cedri (strain Cc).